The following is a 603-amino-acid chain: Pentatricopeptide repeat-containing protein At2g02980, chloroplastic (603 aa).

The N-terminal 38 residues, 1–38 (MAISSASLISSFSHAETFTKHSKIDTVNTQNPILLISK), are a transit peptide targeting the chloroplast. PPR repeat units lie at residues 93–127 (DIVI…GILP), 128–162 (DNYT…GLDD), 163–193 (NVYV…IVEP), 194–228 (CVVC…YLKP), 229–263 (NEIT…SFCK), 264–294 (YVKV…MRYK), 295–329 (DTQA…NVQP), 330–365 (DEIT…GIVP), 366–400 (SIKH…PTPM), and 432–466 (HGGD…KAVK). The interval 401 to 476 (LWRILLAACS…VPGCSSIEVN (76 aa)) is type E motif. Positions 477–507 (NVVHEFFSGDGVKSATTKLHRALDEMVKELK) are type E(+) motif. The tract at residues 508–603 (LSGYVPDTSM…DGKCSCGDFW (96 aa)) is type DYW motif.

The protein belongs to the PPR family. PCMP-H subfamily.

The protein resides in the plastid. It is found in the chloroplast. In terms of biological role, involved in RNA editing event in chloroplasts. Required for the editing of a single site in ndhD transcript, which is a plastid-encoded subunits of the chloroplast NAD(P)H dehydrogenase (NDH) complex. Not essential for the activity of the NDH complex of the photosynthetic electron transport chain. The sequence is that of Pentatricopeptide repeat-containing protein At2g02980, chloroplastic (PCMP-H26) from Arabidopsis thaliana (Mouse-ear cress).